A 600-amino-acid polypeptide reads, in one-letter code: Proline--tRNA ligase (600 aa).

The protein belongs to the class-II aminoacyl-tRNA synthetase family. ProS type 1 subfamily. As to quaternary structure, homodimer.

The protein resides in the cytoplasm. The enzyme catalyses tRNA(Pro) + L-proline + ATP = L-prolyl-tRNA(Pro) + AMP + diphosphate. Catalyzes the attachment of proline to tRNA(Pro) in a two-step reaction: proline is first activated by ATP to form Pro-AMP and then transferred to the acceptor end of tRNA(Pro). As ProRS can inadvertently accommodate and process non-cognate amino acids such as alanine and cysteine, to avoid such errors it has two additional distinct editing activities against alanine. One activity is designated as 'pretransfer' editing and involves the tRNA(Pro)-independent hydrolysis of activated Ala-AMP. The other activity is designated 'posttransfer' editing and involves deacylation of mischarged Ala-tRNA(Pro). The misacylated Cys-tRNA(Pro) is not edited by ProRS. This is Proline--tRNA ligase from Prochlorococcus marinus (strain MIT 9215).